The sequence spans 324 residues: Transcription factor TCP24 (324 aa).

The region spanning 50–108 (GKDRHSKVLTSKGLRDRRIRLSVATAIQFYDLQDRLGFDQPSKAVEWLINAASDSITDL) is the TCP domain. 2 disordered regions span residues 122–215 (QNQT…PMNH) and 261–297 (QRSS…NHQL). A compositionally biased stretch (low complexity) spans 127-142 (SACSSGTSESSLLSLS). The 19-residue stretch at 144–162 (TEIRGKARERARERTAKDR) folds into the R domain. Over residues 144–167 (TEIRGKARERARERTAKDRDKDLQ) the composition is skewed to basic and acidic residues. 2 stretches are compositionally biased toward polar residues: residues 168 to 192 (NAHS…NWTG) and 200 to 212 (VQLQ…SQEP). Residues 261–281 (QRSSISSSSSSSSPMDSQSIS) show a composition bias toward low complexity.

Forms a heterodimeric complex with ABAP1. Interacts with SPL. As to expression, expressed in cotyledons, particularly in the vascular region, in leaves, roots, stems, buds, flowers and siliques.

The protein resides in the nucleus. In terms of biological role, plays a pivotal role in the control of morphogenesis of shoot organs by negatively regulating the expression of boundary-specific genes such as CUC genes, probably through the induction of miRNA (e.g. miR164). In association with ABAP1, exerts a negative role in cell proliferation in leaves, possibly by inhibiting mitotic DNA replication. Participates in ovule development. The protein is Transcription factor TCP24 (TCP24) of Arabidopsis thaliana (Mouse-ear cress).